We begin with the raw amino-acid sequence, 117 residues long: Immunoglobulin kappa variable 1D-12 (117 aa).

An N-terminal signal peptide occupies residues 1–22 (MDMMVPAQLLGLLLLWFPGSRC). Residues 23-45 (DIQMTQSPSSVSASVGDRVTITC) are framework-1. The 94-residue stretch at 24–117 (IQMTQSPSSV…YYCQQANSFP (94 aa)) folds into the Ig-like domain. The cysteines at positions 45 and 110 are disulfide-linked. The interval 46-56 (RASQGISSWLA) is complementarity-determining-1. A framework-2 region spans residues 57–71 (WYQQKPGKAPKLLIY). The tract at residues 72 to 78 (AASSLQS) is complementarity-determining-2. Residues 79 to 110 (GVPSRFSGSGSGTDFTLTISSLQPEDFATYYC) form a framework-3 region. Residues 111 to 117 (QQANSFP) form a complementarity-determining-3 region.

In terms of assembly, immunoglobulins are composed of two identical heavy chains and two identical light chains; disulfide-linked.

It is found in the secreted. It localises to the cell membrane. In terms of biological role, v region of the variable domain of immunoglobulin light chains that participates in the antigen recognition. Immunoglobulins, also known as antibodies, are membrane-bound or secreted glycoproteins produced by B lymphocytes. In the recognition phase of humoral immunity, the membrane-bound immunoglobulins serve as receptors which, upon binding of a specific antigen, trigger the clonal expansion and differentiation of B lymphocytes into immunoglobulins-secreting plasma cells. Secreted immunoglobulins mediate the effector phase of humoral immunity, which results in the elimination of bound antigens. The antigen binding site is formed by the variable domain of one heavy chain, together with that of its associated light chain. Thus, each immunoglobulin has two antigen binding sites with remarkable affinity for a particular antigen. The variable domains are assembled by a process called V-(D)-J rearrangement and can then be subjected to somatic hypermutations which, after exposure to antigen and selection, allow affinity maturation for a particular antigen. The polypeptide is Immunoglobulin kappa variable 1D-12 (Homo sapiens (Human)).